The following is a 70-amino-acid chain: uncharacterized protein (70 aa).

A helical membrane pass occupies residues 14–34 (CLVVWFACVYSLLILVVLLLI).

The protein resides in the virion membrane. This is an uncharacterized protein from Homo sapiens (Human).